The chain runs to 333 residues: Adenosine deaminase (333 aa).

Zn(2+) contacts are provided by histidine 12 and histidine 14. Histidine 14, aspartate 16, and glycine 170 together coordinate substrate. Position 197 (histidine 197) interacts with Zn(2+). Catalysis depends on glutamate 200, which acts as the Proton donor. Zn(2+) is bound at residue aspartate 278. Residue aspartate 279 coordinates substrate.

This sequence belongs to the metallo-dependent hydrolases superfamily. Adenosine and AMP deaminases family. Adenosine deaminase subfamily. Requires Zn(2+) as cofactor.

The catalysed reaction is adenosine + H2O + H(+) = inosine + NH4(+). It carries out the reaction 2'-deoxyadenosine + H2O + H(+) = 2'-deoxyinosine + NH4(+). In terms of biological role, catalyzes the hydrolytic deamination of adenosine and 2-deoxyadenosine. In Salmonella paratyphi C (strain RKS4594), this protein is Adenosine deaminase.